The sequence spans 160 residues: Ribosome maturation factor RimP (160 aa).

The protein belongs to the RimP family.

Its subcellular location is the cytoplasm. Functionally, required for maturation of 30S ribosomal subunits. The sequence is that of Ribosome maturation factor RimP from Cronobacter sakazakii (strain ATCC BAA-894) (Enterobacter sakazakii).